The chain runs to 446 residues: Histone acetyltransferase type B subunit 2 (446 aa).

WD repeat units lie at residues 138 to 178, 189 to 229, 231 to 270, 286 to 326, and 330 to 370; these read DHPG…ITPS, GHKE…GTSK, LKYS…QIID, GHSD…SKVH, and GHQD…DEQT. Residues 372-376 form an interaction with the histone H4 N-terminus region; the sequence is DDAED. One copy of the WD 6 repeat lies at 387-427; sequence GHTNHLADFSWNRNDPWLVCSAAEDNLLQIWKVANSIVSKE. Residues 427 to 446 are disordered; the sequence is EPADMSTPELDDPKPKQSSH. Positions 437–446 are enriched in basic and acidic residues; that stretch reads DDPKPKQSSH.

It belongs to the WD repeat RBAP46/RBAP48/MSI1 family. In terms of assembly, component of the HAT-B complex composed of at least hat-1 and hat-2. The HAT-B complex binds to histone H4 tail.

Its subcellular location is the cytoplasm. It is found in the nucleus. Regulatory subunit of the histone acetylase B (HAT-B) complex. The complex acetylates 'Lys-12' of histone H4 which is required for telomeric silencing. This chain is Histone acetyltransferase type B subunit 2 (hat-2), found in Neurospora crassa (strain ATCC 24698 / 74-OR23-1A / CBS 708.71 / DSM 1257 / FGSC 987).